We begin with the raw amino-acid sequence, 290 residues long: 4-diphosphocytidyl-2-C-methyl-D-erythritol kinase (290 aa).

Lys13 is an active-site residue. Residue 96–106 (PMGGGIGGGSS) coordinates ATP. Asp138 is an active-site residue.

This sequence belongs to the GHMP kinase family. IspE subfamily.

The enzyme catalyses 4-CDP-2-C-methyl-D-erythritol + ATP = 4-CDP-2-C-methyl-D-erythritol 2-phosphate + ADP + H(+). It functions in the pathway isoprenoid biosynthesis; isopentenyl diphosphate biosynthesis via DXP pathway; isopentenyl diphosphate from 1-deoxy-D-xylulose 5-phosphate: step 3/6. Functionally, catalyzes the phosphorylation of the position 2 hydroxy group of 4-diphosphocytidyl-2C-methyl-D-erythritol. The sequence is that of 4-diphosphocytidyl-2-C-methyl-D-erythritol kinase from Vibrio campbellii (strain ATCC BAA-1116).